Consider the following 442-residue polypeptide: Putative zinc metalloprotease PM1991 (442 aa).

H21 is a binding site for Zn(2+). E22 is a catalytic residue. H25 lines the Zn(2+) pocket. The helical transmembrane segment at 97–119 threads the bilayer; the sequence is AFVIAAGPIANFLFAILAYFTIY. A PDZ domain is found at 198-286; sequence DWRFDPEKES…FSFVVLTPEL (89 aa). Helical transmembrane passes span 366–388 and 418–440; these read IGLIYYLGFMALISVNLGIMNLF and LSYRIGAAILMALMGFALFNDFL.

Belongs to the peptidase M50B family. Zn(2+) serves as cofactor.

It localises to the cell inner membrane. The sequence is that of Putative zinc metalloprotease PM1991 from Pasteurella multocida (strain Pm70).